The sequence spans 89 residues: DNA-binding protein HU (89 aa).

Belongs to the bacterial histone-like protein family. In terms of assembly, homodimer. The dimer interacts with the DNA mimic protein DMP12. It also interacts with the monomeric form of the DNA mimic protein DMP19 with 1:1 stoichiometry.

With respect to regulation, activity is regulated by the DNA mimic protein DMP12. Activity is inhibited in the presence of the DNA mimic protein DMP19, which interacts with HU and prevents the binding of HU to DNA. Its function is as follows. Histone-like DNA-binding protein which is capable of wrapping DNA to stabilize it, and thus to prevent its denaturation under extreme environmental conditions. In Neisseria meningitidis serogroup B (strain ATCC BAA-335 / MC58), this protein is DNA-binding protein HU.